Reading from the N-terminus, the 450-residue chain is Tol-Pal system protein TolB (450 aa).

An N-terminal signal peptide occupies residues 1–47; sequence MRKLWAPNWLSAKRHHANQAATRLIGRHALMAWLAAALALSAGAAQA.

This sequence belongs to the TolB family. The Tol-Pal system is composed of five core proteins: the inner membrane proteins TolA, TolQ and TolR, the periplasmic protein TolB and the outer membrane protein Pal. They form a network linking the inner and outer membranes and the peptidoglycan layer.

Its subcellular location is the periplasm. Its function is as follows. Part of the Tol-Pal system, which plays a role in outer membrane invagination during cell division and is important for maintaining outer membrane integrity. The chain is Tol-Pal system protein TolB from Cupriavidus pinatubonensis (strain JMP 134 / LMG 1197) (Cupriavidus necator (strain JMP 134)).